The following is a 636-amino-acid chain: MLSLLLVLTTLARIHAHYTSGDVVYHTMPHFWTGVGFCPAGRIDHEGISAALGDPALRLNLRLIAALPVGAVTHIRIHWLLELIQFWQYDPSGIPIYDFSKFDDFIDFLHEELRLSPVLEWMGNLGGVFSENPMQQSFYWEHLVKTTINHQIARHGSSRLVNWRYETWNEPDLRGYNKQNFTAHTFLDYVQAVRRGLSKAGNLDNQDGKVPLPMYRSLRGPAGLFKDSNHPLCWNLLELCSQRVVYCPIDILTFHRKGIEGTATEIVNGSLSLMAKIYEEYPNLKQLPVANDEADPVAGWSTSRDFQADVRYGITLISTVMQFWHAKLAGGPLSRLESISHDNAFLSYHPHEFTQRTLLAHFRMNETKPPHSQLVQKPVYAALGMLAKLGTRAADVEMVNMDTKHSVQVLRTVSGGLGGPGQYMATIFLSPEEAGPKMTAFHHKYTLNMSIANESAFVTELLVPKETDPYYIWQQAGSPAYPNATLREAMRRAQAPRLYKTGPIWQYNSELVINSASIPLPWAMLLRVCSASWPKLRRPQQLSIAEVTQREVFISWMEHPKSTQCLLSYEVWFKERDNLGRSADWMLISQGWHLPYPSFQYAPGDKGSVNGFYKVRGVDVFNETSPYSQIVEYLEL.

The first 16 residues, 1–16 (MLSLLLVLTTLARIHA), serve as a signal peptide directing secretion. Residues Pro-39, Ile-43, and His-45 each contribute to the alpha-D-mannopyranose site. Residues His-78, Asn-169, and Glu-170 each coordinate alpha-L-iduronate. Glu-170 acts as the Proton donor in catalysis. A glycan (N-linked (GlcNAc...) asparagine) is linked at Asn-180. An alpha-L-iduronate-binding site is contributed by Lys-257. N-linked (GlcNAc...) asparagine glycosylation occurs at Asn-268. Alpha-L-iduronate-binding residues include Glu-293 and Gly-299. Glu-293 (nucleophile) is an active-site residue. Alpha-D-mannopyranose is bound at residue Trp-300. Residues Asp-342 and Arg-356 each coordinate alpha-L-iduronate. Residues Asn-365, Asn-448, Asn-453, and Asn-483 are each glycosylated (N-linked (GlcNAc...) asparagine). Cysteines 529 and 565 form a disulfide. An N-linked (GlcNAc...) asparagine glycan is attached at Asn-622.

The protein belongs to the glycosyl hydrolase 39 family.

It localises to the lysosome. It carries out the reaction Hydrolysis of unsulfated alpha-L-iduronosidic linkages in dermatan sulfate.. Functionally, essential lysosomal hydrolase responsible for the degradation of glycosaminoglycans (GAG) such as heparan sulfate. Required for lysosome function and autophagy. Consequently, has an essential role in the development, maintenance and function of various cells, tissues, and organs, including the muscles and the central nervous system (CNS). The protein is Alpha-L-iduronidase of Drosophila melanogaster (Fruit fly).